The chain runs to 203 residues: Somatotropin (203 aa).

Positions 1 to 17 are cleaved as a signal peptide; the sequence is MDRVVIVLSVLSVAASS. Position 18 is a pyrrolidone carboxylic acid (Gln18). A Zn(2+)-binding site is contributed by His35. Cys68 and Cys176 form a disulfide bridge. Glu185 provides a ligand contact to Zn(2+). A disulfide bridge links Cys193 with Cys201.

It belongs to the somatotropin/prolactin family.

It is found in the secreted. Growth hormone plays an important role in growth control and is involved in the regulation of several anabolic processes. Implicated as an osmoregulatory substance important for seawater adaptation. This Solea senegalensis (Senegalese sole) protein is Somatotropin (gh).